A 383-amino-acid chain; its full sequence is Inactive serine protease 54 (383 aa).

Positions 1–20 (MAEMRGMLLMLLYISHSSSA) are cleaved as a signal peptide. In terms of domain architecture, Peptidase S1 spans 21–258 (ICGIQKATIA…YSDWITAKTR (238 aa)). Residue Asn113 is glycosylated (N-linked (GlcNAc...) asparagine). 3 disulfides stabilise this stretch: Cys154-Cys216, Cys185-Cys195, and Cys206-Cys237. A disordered region spans residues 305–334 (QGQRMSTKSNKQKDAGQNFRVNRQPETSGP). A compositionally biased stretch (polar residues) spans 323-334 (FRVNRQPETSGP).

It belongs to the peptidase S1 family. Plasma kallikrein subfamily.

The protein localises to the secreted. This is Inactive serine protease 54 (Prss54) from Mus musculus (Mouse).